The primary structure comprises 297 residues: MKFENCRDCREEVVWWAFTADICMTLFKGILGLMSGSVALVADSLHSGADVVASGVTQLSLKISNKPADERYPFGYGNIQYISSAIVGSLLLIGASFLMYGSVVKLISGTYEAPSIFAALGASVTVIVNELMYRYQICVGNENNSPAIIANAWDNRSDAISSAAVMVGVIASVIGFPIADTIAAIGVSALVGHIGLELIGKAVHGLMDSSVDTELLQTAWQIATDTPLVHSIYFLRGRHVGEDVQFDIRLRVDPNLRIKDSSMVAEAVRQRIQDEIPHARDIRLFVSPAPAAVTVRV.

Residues 1–12 (MKFENCRDCREE) are Cytoplasmic-facing. The tract at residues 1 to 214 (MKFENCRDCR…GLMDSSVDTE (214 aa)) is transmembrane domain (TMD). Residues 13 to 33 (VVWWAFTADICMTLFKGILGL) form a helical membrane-spanning segment. The Lumenal portion of the chain corresponds to 34–83 (MSGSVALVADSLHSGADVVASGVTQLSLKISNKPADERYPFGYGNIQYIS). Residues 84–104 (SAIVGSLLLIGASFLMYGSVV) form a helical membrane-spanning segment. At 105-112 (KLISGTYE) the chain is on the cytoplasmic side. A helical membrane pass occupies residues 113 to 133 (APSIFAALGASVTVIVNELMY). Topologically, residues 134–164 (RYQICVGNENNSPAIIANAWDNRSDAISSAA) are lumenal. A helical membrane pass occupies residues 165–185 (VMVGVIASVIGFPIADTIAAI). Topologically, residues 186-297 (GVSALVGHIG…PAPAAVTVRV (112 aa)) are cytoplasmic. Residues 215–297 (LLQTAWQIAT…PAPAAVTVRV (83 aa)) are C-terminal domain (CTD).

This sequence belongs to the cation diffusion facilitator (CDF) transporter (TC 2.A.4) family. As to quaternary structure, forms homodimers via its C-terminal domain, may form higher order multimers that are sensitive to reducing agent. Probably interacts with MamE. Interacts with MamM via their C-terminal domains.

It is found in the cell inner membrane. The protein resides in the magnetosome membrane. Its function is as follows. Plays a dual, essential role in magnetosome formation; required for magnetosome vesicle formation as well as biomineralization. Requires heterodimerization with MamM for stability. Probably binds and transports iron. One of 7 genes (mamLQBIEMO) able to induce magnetosome membrane biogenesis; coexpression of mamLQRBIEMO in a deletion of the 17 gene mamAB operon restores magnetosome vesicle formation but not magnetite biosynthesis. This Magnetospirillum gryphiswaldense (strain DSM 6361 / JCM 21280 / NBRC 15271 / MSR-1) protein is Magnetosome protein MamB.